Here is a 682-residue protein sequence, read N- to C-terminus: Kinesin-like protein KIF2A (682 aa).

The interval 1–192 is globular; sequence MVTSLNEDSE…LDYRPLTTSD (192 aa). The segment at 39–129 is disordered; it reads LAPDEEIDPG…GKKDFGLASR (91 aa). Residues 99-115 are compositionally biased toward polar residues; it reads IEQSASRQQNGSVSDIS. The region spanning 198–528 is the Kinesin motor domain; it reads RICVCVRKRP…LRYANRVKEL (331 aa). Residue 288-295 coordinates ATP; it reads GQTGSGKT. A coiled-coil region spans residues 638-673; that stretch reads QLEAILEKKIDILTELRDKVKSFRAALQEEEHASKQ.

This sequence belongs to the TRAFAC class myosin-kinesin ATPase superfamily. Kinesin family. MCAK/KIF2 subfamily. As to quaternary structure, interacts with aurka and plk1. Phosphorylation by plk1 promotes location at spindle microtubules and spindle poles, and enhances its microtubule depolymerization activity. In terms of processing, phosphorylation by AURKA interferes with location at spindle microtubules and spindle poles, and inhibits its microtubule depolymerization activity.

Its subcellular location is the cytoplasm. The protein localises to the cytoskeleton. The protein resides in the microtubule organizing center. It is found in the centrosome. It localises to the spindle pole. Its subcellular location is the spindle. In terms of biological role, plus end-directed microtubule-dependent motor. May regulate microtubule dynamics during axonal growth. Required for normal progression through mitosis. Required for normal congress of chromosomes at the metaphase plate. Required for normal spindle dynamics during mitosis. Promotes spindle turnover. Implicated in formation of bipolar mitotic spindles Has microtubule depolymerization activity. This chain is Kinesin-like protein KIF2A (kif2a), found in Xenopus laevis (African clawed frog).